We begin with the raw amino-acid sequence, 318 residues long: Type II methyltransferase M.HaeII (318 aa).

The SAM-dependent MTase C5-type domain maps to 4 to 304; the sequence is YKTIDLFAGI…GSMINSLNMA (301 aa). The active site involves Cys73.

It belongs to the class I-like SAM-binding methyltransferase superfamily. C5-methyltransferase family.

The enzyme catalyses a 2'-deoxycytidine in DNA + S-adenosyl-L-methionine = a 5-methyl-2'-deoxycytidine in DNA + S-adenosyl-L-homocysteine + H(+). A methylase, recognizes the double-stranded sequence 5'-RGCGCY-3', methylates C-? on both strands, and protects the DNA from cleavage by the HaeII endonuclease. The sequence is that of Type II methyltransferase M.HaeII (haeIIM) from Haemophilus aegyptius.